The chain runs to 135 residues: ATP synthase epsilon chain (135 aa).

The segment covering 89–100 (SGKAEAELEKAK) has biased composition (basic and acidic residues). Residues 89–114 (SGKAEAELEKAKNQLSQNKDQGNSPE) are disordered. Over residues 101 to 112 (NQLSQNKDQGNS) the composition is skewed to polar residues.

The protein belongs to the ATPase epsilon chain family. In terms of assembly, F-type ATPases have 2 components, CF(1) - the catalytic core - and CF(0) - the membrane proton channel. CF(1) has five subunits: alpha(3), beta(3), gamma(1), delta(1), epsilon(1). CF(0) has three main subunits: a, b and c.

It is found in the cellular thylakoid membrane. In terms of biological role, produces ATP from ADP in the presence of a proton gradient across the membrane. In Prochlorococcus marinus (strain NATL2A), this protein is ATP synthase epsilon chain.